Consider the following 145-residue polypeptide: uncharacterized protein (145 aa).

A disordered region spans residues 71–95; that stretch reads GARGRGRTYTKGGSSRSPASWAEQG.

This is an uncharacterized protein from Homo sapiens (Human).